A 164-amino-acid chain; its full sequence is 2-keto-3-deoxy-D-glycero-D-galacto-9-phosphonononic acid phosphatase (164 aa).

Asp10 and Asp12 together coordinate Mg(2+). Residues Thr34, 54–56 (TGE), 64–67 (RAEK), and Lys80 contribute to the substrate site. Residue Asp103 coordinates Mg(2+). Asn106 provides a ligand contact to substrate.

Belongs to the KdsC family. In terms of assembly, homotetramer. Requires Mg(2+) as cofactor.

The enzyme catalyses 3-deoxy-D-glycero-beta-D-galacto-non-2-ulopyranosonate 9-phosphate + H2O = 3-deoxy-D-glycero-beta-D-galacto-non-2-ulopyranosonate + phosphate. Involved in the biosynthesis of 2-keto-3-deoxy-D-glycero-D-galacto-nononic acid used in cell-wall polysaccharides. Catalyzes the hydrolysis of 2-keto-3-deoxy-D-glycero-D-galacto-9-phosphonononic acid (KDN-9-P) to yield 2-keto-3-deoxy-D-glycero-D-galacto-nononic acid (KDN). Also able to hydrolyze N-acetylneuraminate-9-phosphate (Neu5NAc-9-P), 2-keto-3-deoxy-D-manno-octulosonate-8-phosphate (KDO-8-P), phosphoenolpyruvate (PEP), gluconate 6-phosphate, tyrosine phosphate ester and glucose-6-P as substrate. The polypeptide is 2-keto-3-deoxy-D-glycero-D-galacto-9-phosphonononic acid phosphatase (Bacteroides thetaiotaomicron (strain ATCC 29148 / DSM 2079 / JCM 5827 / CCUG 10774 / NCTC 10582 / VPI-5482 / E50)).